Here is a 94-residue protein sequence, read N- to C-terminus: Small ribosomal subunit protein uS17 (94 aa).

This sequence belongs to the universal ribosomal protein uS17 family. As to quaternary structure, part of the 30S ribosomal subunit.

Its function is as follows. One of the primary rRNA binding proteins, it binds specifically to the 5'-end of 16S ribosomal RNA. This chain is Small ribosomal subunit protein uS17, found in Streptomyces griseus subsp. griseus (strain JCM 4626 / CBS 651.72 / NBRC 13350 / KCC S-0626 / ISP 5235).